Reading from the N-terminus, the 574-residue chain is Glutamyl-tRNA(Gln) amidotransferase subunit B, mitochondrial (574 aa).

Residues 1–12 (MIRQFVSHRGIP) constitute a mitochondrion transit peptide. Positions 34-62 (PLGRKNWSTSDEAKSKRAAMRKGGAPPPE) are disordered.

It belongs to the GatB/GatE family. GatB subfamily. As to quaternary structure, subunit of the heterotrimeric GatCAB amidotransferase (AdT) complex, composed of A, B and C subunits.

It localises to the mitochondrion. It catalyses the reaction L-glutamyl-tRNA(Gln) + L-glutamine + ATP + H2O = L-glutaminyl-tRNA(Gln) + L-glutamate + ADP + phosphate + H(+). Its function is as follows. Allows the formation of correctly charged Gln-tRNA(Gln) through the transamidation of misacylated Glu-tRNA(Gln) in the mitochondria. The reaction takes place in the presence of glutamine and ATP through an activated gamma-phospho-Glu-tRNA(Gln). The polypeptide is Glutamyl-tRNA(Gln) amidotransferase subunit B, mitochondrial (Ajellomyces capsulatus (strain H143) (Darling's disease fungus)).